The sequence spans 191 residues: UMP-CMP kinase 2 (191 aa).

12 to 17 (GSGKGT) contacts ATP. The interval 32 to 62 (SAGDLLRAERQREGSEFGALIESHIKNGSIV) is NMP. A ribonucleoside 5'-phosphate-binding positions include Arg-38, 60–62 (SIV), and 88–91 (GFPR). Asn-95 contacts CMP. An LID region spans residues 128–136 (NRGQGRTDD). Arg-129 lines the ATP pocket. Residues Arg-133 and Arg-144 each contribute to the a ribonucleoside 5'-phosphate site. Position 172 (Arg-172) interacts with ATP.

It belongs to the adenylate kinase family. UMP-CMP kinase subfamily. Monomer. Mg(2+) is required as a cofactor. In terms of tissue distribution, expressed in neurons and the pharynx.

The protein localises to the cytoplasm. It localises to the nucleus. It catalyses the reaction CMP + ATP = CDP + ADP. The enzyme catalyses dCMP + ATP = dCDP + ADP. The catalysed reaction is UMP + ATP = UDP + ADP. In terms of biological role, catalyzes the phosphorylation of pyrimidine nucleoside monophosphates at the expense of ATP. Plays an important role in de novo pyrimidine nucleotide biosynthesis. Has preference for UMP and CMP as phosphate acceptors. The chain is UMP-CMP kinase 2 from Caenorhabditis elegans.